Reading from the N-terminus, the 657-residue chain is tRNA 5-methylaminomethyl-2-thiouridine biosynthesis bifunctional protein MnmC (657 aa).

Residues 1–239 (MTDRIVPATL…KRAMLVGEFA (239 aa)) are tRNA (mnm(5)s(2)U34)-methyltransferase. Positions 263-657 (IGAGLAGCAV…VRALRHGRVA (395 aa)) are FAD-dependent cmnm(5)s(2)U34 oxidoreductase.

This sequence in the N-terminal section; belongs to the methyltransferase superfamily. tRNA (mnm(5)s(2)U34)-methyltransferase family. The protein in the C-terminal section; belongs to the DAO family. It depends on FAD as a cofactor.

It is found in the cytoplasm. The catalysed reaction is 5-aminomethyl-2-thiouridine(34) in tRNA + S-adenosyl-L-methionine = 5-methylaminomethyl-2-thiouridine(34) in tRNA + S-adenosyl-L-homocysteine + H(+). Catalyzes the last two steps in the biosynthesis of 5-methylaminomethyl-2-thiouridine (mnm(5)s(2)U) at the wobble position (U34) in tRNA. Catalyzes the FAD-dependent demodification of cmnm(5)s(2)U34 to nm(5)s(2)U34, followed by the transfer of a methyl group from S-adenosyl-L-methionine to nm(5)s(2)U34, to form mnm(5)s(2)U34. In Burkholderia pseudomallei (strain 668), this protein is tRNA 5-methylaminomethyl-2-thiouridine biosynthesis bifunctional protein MnmC.